A 421-amino-acid polypeptide reads, in one-letter code: Lipid II:glycine glycyltransferase (421 aa).

Belongs to the FemABX family. As to quaternary structure, monomer.

The protein resides in the cytoplasm. The catalysed reaction is beta-D-GlcNAc-(1-&gt;4)-Mur2Ac(oyl-L-Ala-D-isoglutaminyl-L-Lys-D-Ala-D-Ala)-di-trans,octa-cis-undecaprenyl diphosphate + glycyl-tRNA(Gly) = beta-D-GlcNAc-(1-&gt;4)-Mur2Ac(oyl-L-Ala-D-isoglutaminyl-L-Lys-(N(6)-Gly)-D-Ala-D-Ala)-di-trans,octa-cis-undecaprenyl diphosphate + tRNA(Gly) + H(+). Its function is as follows. Catalyzes the incorporation of the first glycine of the pentaglycine interpeptide bridge, which is characteristic of the S.aureus peptidoglycan. This glycine is added to the epsilon-amino group of the L-lysine of the membrane-bound lipid II intermediate (GlcNAc-(beta-1,4)-N-acetylmuramic acid(-L-Ala-D-iGln-L-Lys-D-Ala-D-Ala)-pyrophosphoryl-undecaprenol), using glycyl-tRNA(Gly) as donor, in a ribosome-independent mechanism. The polypeptide is Lipid II:glycine glycyltransferase (femX) (Staphylococcus aureus (strain bovine RF122 / ET3-1)).